A 119-amino-acid polypeptide reads, in one-letter code: Ribonuclease P protein component (119 aa).

It belongs to the RnpA family. Consists of a catalytic RNA component (M1 or rnpB) and a protein subunit.

The catalysed reaction is Endonucleolytic cleavage of RNA, removing 5'-extranucleotides from tRNA precursor.. RNaseP catalyzes the removal of the 5'-leader sequence from pre-tRNA to produce the mature 5'-terminus. It can also cleave other RNA substrates such as 4.5S RNA. The protein component plays an auxiliary but essential role in vivo by binding to the 5'-leader sequence and broadening the substrate specificity of the ribozyme. This Klebsiella pneumoniae (strain 342) protein is Ribonuclease P protein component.